A 298-amino-acid chain; its full sequence is Acetaldehyde dehydrogenase (298 aa).

6–9 (SGNI) provides a ligand contact to NAD(+). Cys121 serves as the catalytic Acyl-thioester intermediate. Residues 152–160 (SAGPGTRAN) and Asn271 contribute to the NAD(+) site.

It belongs to the acetaldehyde dehydrogenase family.

The enzyme catalyses acetaldehyde + NAD(+) + CoA = acetyl-CoA + NADH + H(+). This chain is Acetaldehyde dehydrogenase, found in Mycobacterium avium (strain 104).